The sequence spans 297 residues: Counting factor 45-1 (297 aa).

A signal peptide spans 1-20 (MNKLISLLLVCLVAIALVNA). The region spanning 24 to 235 (IDFDSDTVNS…SASTGSGSGS (212 aa)) is the Ch-type lysozyme domain. Catalysis depends on residues D29, D119, and E121. N-linked (GlcNAc...) asparagine glycosylation occurs at N166. The segment at 231–296 (SGSGSSSGSS…GSSSGSGSGS (66 aa)) is S-G-S motif repeats. A disordered region spans residues 231–297 (SGSGSSSGSS…SSSGSGSGSS (67 aa)). The span at 234-275 (GSSSGSSSGSSSGSSSGSGSSSGSGSSSGSSSGSGSGSSSSG) shows a compositional bias: low complexity. The segment covering 276–297 (SGSGSGSSSGSGSSSGSGSGSS) has biased composition (gly residues).

Belongs to the glycosyl hydrolase 25 family. As to quaternary structure, monomer. Component of the counting factor (CF) complex, which includes cf60, cf50, cf45-1 and ctnA.

The protein resides in the secreted. Cell-counting factor that limits the maximum size of the multicellular structure during aggregation. In Dictyostelium discoideum (Social amoeba), this protein is Counting factor 45-1 (cf45-1).